The sequence spans 178 residues: Large ribosomal subunit protein uL6 (178 aa).

It belongs to the universal ribosomal protein uL6 family. As to quaternary structure, part of the 50S ribosomal subunit.

Its function is as follows. This protein binds to the 23S rRNA, and is important in its secondary structure. It is located near the subunit interface in the base of the L7/L12 stalk, and near the tRNA binding site of the peptidyltransferase center. The protein is Large ribosomal subunit protein uL6 of Opitutus terrae (strain DSM 11246 / JCM 15787 / PB90-1).